Reading from the N-terminus, the 461-residue chain is Probable outer membrane lipoprotein SilC (461 aa).

The signal sequence occupies residues 1–17 (MFKLKLLSISTIFILAG). Cys18 is lipidated: N-palmitoyl cysteine. Cys18 carries S-diacylglycerol cysteine lipidation.

Belongs to the outer membrane factor (OMF) (TC 1.B.17) family.

The protein resides in the cell outer membrane. In terms of biological role, component of the sil cation-efflux system that confers resistance to silver. May be part of a three-component cation/proton antiporter. The polypeptide is Probable outer membrane lipoprotein SilC (silC) (Salmonella typhimurium).